Reading from the N-terminus, the 105-residue chain is SAGA-associated factor 11 (105 aa).

The SGF11-type zinc finger occupies Phe76–Cys97.

It belongs to the SGF11 family. Component of the 1.8 MDa SAGA transcription coactivator-HAT complex. SAGA is built of 5 distinct domains with specialized functions. Within the SAGA complex, SUS1, SGF11, SGF73 and UBP8 form an additional subcomplex of SAGA called the DUB module (deubiquitination module). Interacts directly with SGF73, SUS1 and UBP8.

Its subcellular location is the nucleus. Its function is as follows. Functions as a component of the transcription regulatory histone acetylation (HAT) complex SAGA. At the promoters, SAGA is required for recruitment of the basal transcription machinery. It influences RNA polymerase II transcriptional activity through different activities such as TBP interaction and promoter selectivity, interaction with transcription activators, and chromatin modification through histone acetylation and deubiquitination. SAGA acetylates nucleosomal histone H3 to some extent (to form H3K9ac, H3K14ac, H3K18ac and H3K23ac). SAGA interacts with DNA via upstream activating sequences (UASs). Involved in transcriptional regulation of a subset of SAGA-regulated genes. Within the SAGA complex, participates in a subcomplex, that specifically deubiquitinates histones H2B. This is SAGA-associated factor 11 from Eremothecium gossypii (strain ATCC 10895 / CBS 109.51 / FGSC 9923 / NRRL Y-1056) (Yeast).